The chain runs to 395 residues: Flap endonuclease 1 (395 aa).

Residues 1 to 108 (MGILGLSKLL…DELEMRRQKA (108 aa)) form an N-domain region. Position 34 (Asp34) interacts with Mg(2+). Arg74 lines the DNA pocket. Residues Asp90, Glu162, Glu164, Asp183, and Asp185 each coordinate Mg(2+). An I-domain region spans residues 126 to 257 (MMEKMSKRTV…QKAWEGIQRY (132 aa)). DNA is bound at residue Glu162. DNA contacts are provided by Gly235 and Asp237. Residue Asp237 participates in Mg(2+) binding. Residues 340 to 348 (TQGRLDSFF) form an interaction with PCNA region.

The protein belongs to the XPG/RAD2 endonuclease family. FEN1 subfamily. In terms of assembly, interacts with PCNA. Three molecules of FEN1 bind to one PCNA trimer with each molecule binding to one PCNA monomer. PCNA stimulates the nuclease activity without altering cleavage specificity. Mg(2+) serves as cofactor. Phosphorylated. Phosphorylation upon DNA damage induces relocalization to the nuclear plasma.

It localises to the nucleus. The protein resides in the nucleolus. Its subcellular location is the nucleoplasm. The protein localises to the mitochondrion. Functionally, structure-specific nuclease with 5'-flap endonuclease and 5'-3' exonuclease activities involved in DNA replication and repair. During DNA replication, cleaves the 5'-overhanging flap structure that is generated by displacement synthesis when DNA polymerase encounters the 5'-end of a downstream Okazaki fragment. It enters the flap from the 5'-end and then tracks to cleave the flap base, leaving a nick for ligation. Also involved in the long patch base excision repair (LP-BER) pathway, by cleaving within the apurinic/apyrimidinic (AP) site-terminated flap. Acts as a genome stabilization factor that prevents flaps from equilibrating into structures that lead to duplications and deletions. Also possesses 5'-3' exonuclease activity on nicked or gapped double-stranded DNA, and exhibits RNase H activity. Also involved in replication and repair of rDNA and in repairing mitochondrial DNA. The chain is Flap endonuclease 1 from Leishmania infantum.